The chain runs to 249 residues: Phosphate import ATP-binding protein PstB (249 aa).

Residues 4–244 (VKIKDLSLFY…PQDKRTEDYI (241 aa)) form the ABC transporter domain. 36–43 (GPSGCGKS) serves as a coordination point for ATP.

This sequence belongs to the ABC transporter superfamily. Phosphate importer (TC 3.A.1.7) family. As to quaternary structure, the complex is composed of two ATP-binding proteins (PstB), two transmembrane proteins (PstC and PstA) and a solute-binding protein (PstS).

The protein resides in the cell membrane. The catalysed reaction is phosphate(out) + ATP + H2O = ADP + 2 phosphate(in) + H(+). Its function is as follows. Part of the ABC transporter complex PstSACB involved in phosphate import. Responsible for energy coupling to the transport system. In Clostridium tetani (strain Massachusetts / E88), this protein is Phosphate import ATP-binding protein PstB.